The primary structure comprises 873 residues: Zinc fingers and homeoboxes protein 1 (873 aa).

The segment at 24–63 (LISDLDEGPPVLTPVENTRAESISSDEEVHESVDSDNQQN) is disordered. A Phosphothreonine modification is found at Thr-36. A phosphoserine mark is found at Ser-45, Ser-47, and Ser-48. 2 C2H2-type zinc fingers span residues 70 to 93 (YECK…DSEH) and 102 to 125 (YVCV…LKYH). Residue Lys-159 forms a Glycyl lysine isopeptide (Lys-Gly) (interchain with G-Cter in SUMO2) linkage. The interval 198–236 (VHHNSVEDVPEEKENEIKPDREETVENPSSSASESNTST) is disordered. Ser-202 is modified (phosphoserine). The span at 212-221 (NEIKPDREET) shows a compositional bias: basic and acidic residues. Low complexity predominate over residues 223–236 (ENPSSSASESNTST). The tract at residues 272-432 (NSNLIPKVLI…QNNVQKSQVP (161 aa)) is required for dimerization. The required for interaction with NFYA stretch occupies residues 272–564 (NSNLIPKVLI…VQPKQSWNPF (293 aa)). Positions 284 to 346 (NSIPTYNAAL…LKHGVSWTPE (63 aa)) form a DNA-binding region, homeobox 1. Residues 431–454 (VPAAQPTAETKPATAAVPTSQSVK) form a disordered region. Glycyl lysine isopeptide (Lys-Gly) (interchain with G-Cter in SUMO2) cross-links involve residues Lys-441, Lys-454, and Lys-485. Positions 464–526 (SFGIRAKKTK…YNQRNSKSNQ (63 aa)) form a DNA-binding region, homeobox 2. Disordered regions lie at residues 544 to 563 (DETT…SWNP), 626 to 668 (KEEK…CKKT), and 732 to 769 (SSMN…INNW). Residues 550-562 (PTVGTVQPKQSWN) show a composition bias toward polar residues. The segment at residues 569 to 630 (PQKFKEKTAE…KSKALKEEKM (62 aa)) is a DNA-binding region (homeobox 3). Residue Lys-629 forms a Glycyl lysine isopeptide (Lys-Gly) (interchain with G-Cter in SUMO2) linkage. Ser-648 bears the Phosphoserine mark. Residues 660-722 (STGKICKKTP…YAWKNGNLKW (63 aa)) constitute a DNA-binding region (homeobox 4). Residues 734-768 (MNGLSSLRKRGRGRPKGRGRGRPRGRPRGSKRINN) are required for nuclear localization. Basic residues predominate over residues 740 to 764 (LRKRGRGRPKGRGRGRPRGRPRGSK). Ser-774 carries the post-translational modification Phosphoserine. The homeobox 5 DNA-binding region spans 777-832 (KFKTGTAILKDYYLKHKFLNEQDLDELVNKSHMGYEQVREWFAERQRRSELGIELF). Residues 829 to 873 (IELFEENEEEDEVIDDQEEDEEETDDSDTWEPPRHVKRKLSKSDD) are disordered. Over residues 831–857 (LFEENEEEDEVIDDQEEDEEETDDSDT) the composition is skewed to acidic residues. The segment at 831-873 (LFEENEEEDEVIDDQEEDEEETDDSDTWEPPRHVKRKLSKSDD) is required for repressor activity. Positions 863–873 (HVKRKLSKSDD) are enriched in basic residues.

It belongs to the ZHX family. Forms homodimers. Heterodimer (via HD1 domain) with ZHX2 (via HD1 domain). Also forms a heterodimer with ZHX3 which is a prerequisite for repressor activity. Interacts with ATF7IP and NFYA. Interacts (via homeobox domains) with DNMT3B (via PWWP domain).

It is found in the nucleus. Acts as a transcriptional repressor. Increases DNMT3B-mediated repressive transcriptional activity when DNMT3B is tethered to DNA. May link molecule between DNMT3B and other co-repressor proteins. In Pongo pygmaeus (Bornean orangutan), this protein is Zinc fingers and homeoboxes protein 1 (ZHX1).